Here is a 147-residue protein sequence, read N- to C-terminus: 3-dehydroquinate dehydratase (147 aa).

Catalysis depends on tyrosine 24, which acts as the Proton acceptor. Substrate is bound by residues asparagine 75, histidine 81, and aspartate 88. Residue histidine 101 is the Proton donor of the active site. Substrate is bound by residues 102–103 (LS) and arginine 112.

It belongs to the type-II 3-dehydroquinase family. Homododecamer.

The enzyme catalyses 3-dehydroquinate = 3-dehydroshikimate + H2O. Its pathway is metabolic intermediate biosynthesis; chorismate biosynthesis; chorismate from D-erythrose 4-phosphate and phosphoenolpyruvate: step 3/7. Its function is as follows. Catalyzes a trans-dehydration via an enolate intermediate. In Caulobacter sp. (strain K31), this protein is 3-dehydroquinate dehydratase.